We begin with the raw amino-acid sequence, 265 residues long: MVSRPRSPSAFPAPWWGQQPGGPGPAKRLRLEEPAGPEPRAAPSLEDPAGDPAVDALTSIVVLAAGCALRVPLDDVDLVLEPAPTSILRVSLGGHTLILIPEVLLSSVDERSGAQHDSSAGLEVDVFLGAVREDVVVELEFCASVPEIAAQEEAYEEDADPEFPELRMDSPTGSAAGLYPSSRSMFIPYREGPIPEPCALAPNPSSERRSPRPIFDLEFRLLEPVPSSPLQPLPPSPCVGSPGPHARSPLPERPPCKARRRLFQA.

The span at 1-18 (MVSRPRSPSAFPAPWWGQ) shows a compositional bias: low complexity. Disordered regions lie at residues 1-49 (MVSR…EDPA) and 226-265 (PSSP…LFQA). The segment covering 226 to 237 (PSSPLQPLPPSP) has biased composition (pro residues). Positions 256 to 265 (CKARRRLFQA) are enriched in basic residues.

It belongs to the PRR23 family.

The protein is Proline-rich protein 23B (PRR23B) of Homo sapiens (Human).